Consider the following 605-residue polypeptide: Zinc metalloproteinase-disintegrin-like BfMP (605 aa).

Residues M1–S11 form the signal peptide. The propeptide occupies I12 to T179. N178 and N215 each carry an N-linked (GlcNAc...) asparagine glycan. One can recognise a Peptidase M12B domain in the interval K196–P392. 17 disulfide bridges follow: C307–C387, C347–C371, C350–C355, C403–C432, C414–C427, C416–C422, C426–C449, C440–C446, C445–C471, C458–C478, C465–C497, C490–C502, C509–C559, C524–C567, C537–C547, C554–C593, and C587–C598. Residue H332 participates in Zn(2+) binding. The active site involves E333. H336 and H342 together coordinate Zn(2+). Positions P400 to N486 constitute a Disintegrin domain. The short motif at D464–D466 is the D/ECD-tripeptide element.

The protein belongs to the venom metalloproteinase (M12B) family. P-III subfamily. P-IIIa sub-subfamily. As to quaternary structure, monomer. Zn(2+) serves as cofactor. Expressed by the venom gland.

The protein localises to the secreted. Its function is as follows. Snake venom zinc metalloproteinase that inhibits platelet aggregation and degrades fibrinogen. This is Zinc metalloproteinase-disintegrin-like BfMP from Bungarus fasciatus (Banded krait).